Consider the following 91-residue polypeptide: Probable Fe(2+)-trafficking protein (91 aa).

The protein belongs to the Fe(2+)-trafficking protein family.

In terms of biological role, could be a mediator in iron transactions between iron acquisition and iron-requiring processes, such as synthesis and/or repair of Fe-S clusters in biosynthetic enzymes. The protein is Probable Fe(2+)-trafficking protein of Xanthomonas euvesicatoria pv. vesicatoria (strain 85-10) (Xanthomonas campestris pv. vesicatoria).